The sequence spans 338 residues: Phenylalanine--tRNA ligase alpha subunit (338 aa).

Glu259 contributes to the Mg(2+) binding site.

The protein belongs to the class-II aminoacyl-tRNA synthetase family. Phe-tRNA synthetase alpha subunit type 1 subfamily. In terms of assembly, tetramer of two alpha and two beta subunits. Mg(2+) is required as a cofactor.

It localises to the cytoplasm. It carries out the reaction tRNA(Phe) + L-phenylalanine + ATP = L-phenylalanyl-tRNA(Phe) + AMP + diphosphate + H(+). This Janthinobacterium sp. (strain Marseille) (Minibacterium massiliensis) protein is Phenylalanine--tRNA ligase alpha subunit.